The chain runs to 725 residues: Polyribonucleotide nucleotidyltransferase (725 aa).

Positions 506 and 512 each coordinate Mg(2+). The KH domain maps to 571–631; it reads PLIEQFAIDP…QNIIDACEHI (61 aa). An S1 motif domain is found at 657-724; it reads DEVVIGKVER…KKDRIELSSA (68 aa).

The protein belongs to the polyribonucleotide nucleotidyltransferase family. It depends on Mg(2+) as a cofactor.

It is found in the cytoplasm. It carries out the reaction RNA(n+1) + phosphate = RNA(n) + a ribonucleoside 5'-diphosphate. Its function is as follows. Involved in mRNA degradation. Catalyzes the phosphorolysis of single-stranded polyribonucleotides processively in the 3'- to 5'-direction. The sequence is that of Polyribonucleotide nucleotidyltransferase from Aliarcobacter butzleri (strain RM4018) (Arcobacter butzleri).